Reading from the N-terminus, the 491-residue chain is Ribosome biogenesis protein YTM1 (491 aa).

The interval 8–103 (IKIKFTTNES…EAFLTIEYTR (96 aa)) is ubiquitin-like (UBL) domain. The tract at residues 113–491 (SFQNDDWISS…QINKGSDISK (379 aa)) is sufficient for interaction with ERB1 and association with 66S pre-ribosomes. WD repeat units follow at residues 128–167 (RNLS…EKQY), 169–207 (GHSA…VVDQ), 241–280 (GHKA…MAKI), 318–358 (GHTE…CVDT), 360–399 (TTGF…SNTN), 409–449 (GHTN…SLYT), and 456–491 (STKS…DISK). Residues 205–228 (VDQNEEDEEENEANEGDDGDNDME) form a disordered region. The segment covering 207-225 (QNEEDEEENEANEGDDGDN) has biased composition (acidic residues).

The protein belongs to the WD repeat WDR12/YTM1 family. As to quaternary structure, component of the NOP7 complex, composed of ERB1, NOP7 and YTM1. The complex is held together by ERB1, which interacts with NOP7 via its N-terminal domain and with YTM1 via a high-affinity interaction between the seven-bladed beta-propeller domains of the 2 proteins. The NOP7 complex associates with the 66S pre-ribosome. Interacts (via UBL domain) with MDN1 (via VWFA/MIDAS domain).

The protein resides in the nucleus. The protein localises to the nucleolus. It localises to the nucleoplasm. Component of the NOP7 complex, which is required for maturation of the 25S and 5.8S ribosomal RNAs and formation of the 60S ribosome. The polypeptide is Ribosome biogenesis protein YTM1 (Lodderomyces elongisporus (strain ATCC 11503 / CBS 2605 / JCM 1781 / NBRC 1676 / NRRL YB-4239) (Yeast)).